Consider the following 121-residue polypeptide: Large ribosomal subunit protein uL22 (121 aa).

It belongs to the universal ribosomal protein uL22 family. As to quaternary structure, part of the 50S ribosomal subunit.

Functionally, this protein binds specifically to 23S rRNA; its binding is stimulated by other ribosomal proteins, e.g. L4, L17, and L20. It is important during the early stages of 50S assembly. It makes multiple contacts with different domains of the 23S rRNA in the assembled 50S subunit and ribosome. In terms of biological role, the globular domain of the protein is located near the polypeptide exit tunnel on the outside of the subunit, while an extended beta-hairpin is found that lines the wall of the exit tunnel in the center of the 70S ribosome. This Synechococcus sp. (strain CC9902) protein is Large ribosomal subunit protein uL22.